Reading from the N-terminus, the 245-residue chain is Zinc import ATP-binding protein ZnuC (245 aa).

One can recognise an ABC transporter domain in the interval 27 to 244; sequence LTADSLTLFY…AKFLSVFPNN (218 aa). Residue 59–66 coordinates ATP; that stretch reads GPNGGGKT.

It belongs to the ABC transporter superfamily. Zinc importer (TC 3.A.1.15.5) family. In terms of assembly, the complex is composed of two ATP-binding proteins (ZnuC), two transmembrane proteins (ZnuB) and a solute-binding protein (ZnuA).

It is found in the cell inner membrane. It carries out the reaction Zn(2+)(out) + ATP(in) + H2O(in) = Zn(2+)(in) + ADP(in) + phosphate(in) + H(+)(in). In terms of biological role, part of the ABC transporter complex ZnuABC involved in zinc import. Responsible for energy coupling to the transport system. The protein is Zinc import ATP-binding protein ZnuC of Anaplasma marginale (strain St. Maries).